The following is a 185-amino-acid chain: Ribosome-recycling factor (185 aa).

It belongs to the RRF family.

The protein localises to the cytoplasm. Responsible for the release of ribosomes from messenger RNA at the termination of protein biosynthesis. May increase the efficiency of translation by recycling ribosomes from one round of translation to another. The sequence is that of Ribosome-recycling factor from Rhodococcus erythropolis (strain PR4 / NBRC 100887).